The following is a 223-amino-acid chain: 2-C-methyl-D-erythritol 4-phosphate cytidylyltransferase (223 aa).

This sequence belongs to the IspD/TarI cytidylyltransferase family. IspD subfamily.

It carries out the reaction 2-C-methyl-D-erythritol 4-phosphate + CTP + H(+) = 4-CDP-2-C-methyl-D-erythritol + diphosphate. It participates in isoprenoid biosynthesis; isopentenyl diphosphate biosynthesis via DXP pathway; isopentenyl diphosphate from 1-deoxy-D-xylulose 5-phosphate: step 2/6. In terms of biological role, catalyzes the formation of 4-diphosphocytidyl-2-C-methyl-D-erythritol from CTP and 2-C-methyl-D-erythritol 4-phosphate (MEP). This Synechococcus sp. (strain WH7803) protein is 2-C-methyl-D-erythritol 4-phosphate cytidylyltransferase.